Here is a 405-residue protein sequence, read N- to C-terminus: Secreted aspartic protease FUS4 (405 aa).

Residues 1–24 (MLAIATLHVALQVFGAFSLSHAAA) form the signal peptide. The Peptidase A1 domain occupies 49–400 (YLFNVTVGSP…NFEERSFGLA (352 aa)). Residues Asn-52, Asn-61, Asn-107, and Asn-123 are each glycosylated (N-linked (GlcNAc...) asparagine). A disulfide bond links Cys-318 and Cys-356.

Belongs to the peptidase A1 family.

The protein localises to the secreted. In terms of biological role, secreted aspartic protease; part of the gene cluster that mediates the biosynthesis of the mycotoxin fusarin C. Within the cluster, FUS1, FUS2, FUS8 and FUS9 are sufficient for fusarin production. The other FUS cluster members are not essential for fusarin C biosynthesis. This Gibberella fujikuroi (strain CBS 195.34 / IMI 58289 / NRRL A-6831) (Bakanae and foot rot disease fungus) protein is Secreted aspartic protease FUS4.